The primary structure comprises 737 residues: MAGLWVRTVALLAARRHWRRSSQQLLWTLKRAPRSSQQLLWTLKRAPVYSQQCLVVSRSLSSVEYEPKEKTFDKILIANRGEIACRVIKTCRKMGIRTVAIHSDVDASSVHVKMADEAVCVGPAPTSKSYLNMDAIMEAIKKTGAQAVHPGYGFLSENKEFAKCLAAEDVTFIGPDTHAIQAMGDKIESKLLAKRAKVNTIPGFDGVLKDADEAVRIAREIGYPVMIKASAGGGGKGMRIPWDDEETRDGFRFSSQEAASSFGDDRLLIEKFIDNPRHIEIQVLGDKHGNALWLNERECSIQRRNQKVVEEAPSIFLDPETRRAMGEQAVAWPKAVKYSSAGTVEFLVDSQKNFYFLEMNTRLQVEHPVTECITGLDLVQEMILVAKGYPLRHKQEDIPISGWAVECRVYAEDPYKSFGLPSIGRLSQYQEPIHLPGVRVDSGIQPGSDISIYHDPMISKLVTYGSDRAEALKRMEDALDSYVIRGVTHNIPLLREVIINTRFVKGDISTKFLSDVYPDGFKGHMLTPSERDQLLAIASSLFVASQLRAQRFQEHSRVPVIRPDVAKWELSVKLHDEDHTVVASNNGPTFNVEVDGSKLNVTSTWNLASPLLSVNVDGTQRTVQCLSPDAGGNMSIQFLGTVYKVHILTKLAAELNKFMLEKVPKDTSSVLRSPKPGVVVAVSVKPGDMVAEGQEICVIEAMKMQNSMTAGKMGKVKLVHCKAGDTVGEGDLLVELE.

The N-terminal 61 residues, 1 to 61 (MAGLWVRTVA…QCLVVSRSLS (61 aa)), are a transit peptide targeting the mitochondrion. Residues 71-518 (TFDKILIANR…STKFLSDVYP (448 aa)) enclose the Biotin carboxylation domain. Lys-74 carries the post-translational modification N6-acetyllysine; alternate. The residue at position 74 (Lys-74) is an N6-succinyllysine; alternate. An N6-succinyllysine modification is found at Lys-128. Position 159 is an N6-acetyllysine; alternate (Lys-159). Lys-159 bears the N6-succinyllysine; alternate mark. N6-acetyllysine is present on Lys-163. An ATP-binding site is contributed by Lys-186. Positions 190-387 (KLLAKRAKVN…LVQEMILVAK (198 aa)) constitute an ATP-grasp domain. Lys-197 is modified (N6-succinyllysine). N6-acetyllysine; alternate is present on Lys-209. Lys-209 is subject to N6-succinyllysine; alternate. ATP contacts are provided by residues 218–279 (AREI…PRHI), Glu-270, and Asn-305. Ser-261 is modified (phosphoserine). At Lys-271 the chain carries N6-succinyllysine. Position 337 is an N6-acetyllysine; alternate (Lys-337). Lys-337 carries the N6-succinyllysine; alternate modification. 3 residues coordinate Mg(2+): Glu-345, Glu-358, and Asn-360. 3 residues coordinate Mn(2+): Glu-345, Glu-358, and Asn-360. Residue Arg-362 is part of the active site. Lys-394 and Lys-416 each carry N6-succinyllysine. Residue Phe-418 coordinates biotin. Residue Lys-505 is modified to N6-acetyllysine. An N6-succinyllysine mark is found at Lys-511, Lys-522, Lys-567, and Lys-657. Residues 658–737 (FMLEKVPKDT…GEGDLLVELE (80 aa)) form the Biotinyl-binding domain. Residue Lys-703 is modified to N6-biotinyllysine; by HLCS.

The holoenzyme is a dodecamer composed of 6 PCCA/alpha subunits and 6 PCCB/beta subunits. Interacts (via the biotin carboxylation domain) with SIRT4. Interacts with SIRT3 and SIRT5. It depends on biotin as a cofactor. Mg(2+) is required as a cofactor. The cofactor is Mn(2+). In terms of processing, acetylated. Post-translationally, the biotin cofactor is covalently attached to the C-terminal biotinyl-binding domain and is required for the catalytic activity. Biotinylation is catalyzed by HLCS.

It is found in the mitochondrion matrix. It carries out the reaction propanoyl-CoA + hydrogencarbonate + ATP = (S)-methylmalonyl-CoA + ADP + phosphate + H(+). The enzyme catalyses butanoyl-CoA + hydrogencarbonate + ATP = (2S)-ethylmalonyl-CoA + ADP + phosphate + H(+). Its pathway is metabolic intermediate metabolism; propanoyl-CoA degradation; succinyl-CoA from propanoyl-CoA: step 1/3. Functionally, this is one of the 2 subunits of the biotin-dependent propionyl-CoA carboxylase (PCC), a mitochondrial enzyme involved in the catabolism of odd chain fatty acids, branched-chain amino acids isoleucine, threonine, methionine, and valine and other metabolites. Propionyl-CoA carboxylase catalyzes the carboxylation of propionyl-CoA/propanoyl-CoA to D-methylmalonyl-CoA/(S)-methylmalonyl-CoA. Within the holoenzyme, the alpha subunit catalyzes the ATP-dependent carboxylation of the biotin carried by the biotin carboxyl carrier (BCC) domain, while the beta subunit then transfers the carboxyl group from carboxylated biotin to propionyl-CoA. Propionyl-CoA carboxylase also significantly acts on butyryl-CoA/butanoyl-CoA, which is converted to ethylmalonyl-CoA/(2S)-ethylmalonyl-CoA. Other alternative minor substrates include (2E)-butenoyl-CoA/crotonoyl-CoA. This Rattus norvegicus (Rat) protein is Propionyl-CoA carboxylase alpha chain, mitochondrial.